The primary structure comprises 395 residues: Guanine nucleotide-binding protein subunit beta-5 (395 aa).

WD repeat units lie at residues 103–142 (GHGN…KEHA), 145–184 (MPCT…NENM), 193–234 (MHTN…QSFH), 236–278 (HGAD…QAFE), 279–318 (THES…EVAI), 320–362 (SKES…RVSI), and 365–394 (GHEN…LRVW).

This sequence belongs to the WD repeat G protein beta family. Component of a complex composed of RGS9 (isoform RGS9-1), GNB5 and RGS9BP; within this complex, the presence of GNB5 stabilizes both itself and RGS9 and increases RGS9 GTPase-activating protein (GAP) activity. Interacts with RGS7, forming the RGS7-GNB5 complex; within this complex, the presence of GNB5 increases RGS7 GTPase-activating protein (GAP) activity. Interacts with GPR158; promotes the GTPase activator activity of the RGS7-GNB5 complex in absence of glycine, in contrast GTPase activator activity of the RGS7-GNB5 complex is inhibited in presence of glycine. Interacts with RGS6. Widely expressed.

It localises to the membrane. Enhances GTPase-activating protein (GAP) activity of regulator of G protein signaling (RGS) proteins, such as RGS7 and RGS9, hence involved in the termination of the signaling initiated by the G protein coupled receptors (GPCRs) by accelerating the GTP hydrolysis on the G-alpha subunits, thereby promoting their inactivation. Increases RGS7 GTPase-activating protein (GAP) activity, thereby regulating mood and cognition. Increases RGS9 GTPase-activating protein (GAP) activity, hence contributes to the deactivation of G protein signaling initiated by D(2) dopamine receptors. May play an important role in neuronal signaling, including in the parasympathetic, but not sympathetic, control of heart rate. This is Guanine nucleotide-binding protein subunit beta-5 (GNB5) from Homo sapiens (Human).